Consider the following 360-residue polypeptide: Dihydroorotate dehydrogenase (quinone) (360 aa).

FMN-binding positions include 60–64 (AGFDK) and Thr84. Residue Lys64 coordinates substrate. Substrate is bound at residue 109-113 (NRMGF). FMN contacts are provided by Asn137 and Asn168. Asn168 provides a ligand contact to substrate. The Nucleophile role is filled by Ser171. Asn173 contacts substrate. Lys213 and Ser241 together coordinate FMN. 242–243 (NT) lines the substrate pocket. FMN-binding positions include Gly264, Gly293, and 314-315 (YS).

Belongs to the dihydroorotate dehydrogenase family. Type 2 subfamily. Monomer. FMN is required as a cofactor.

The protein localises to the cell membrane. It catalyses the reaction (S)-dihydroorotate + a quinone = orotate + a quinol. The protein operates within pyrimidine metabolism; UMP biosynthesis via de novo pathway; orotate from (S)-dihydroorotate (quinone route): step 1/1. In terms of biological role, catalyzes the conversion of dihydroorotate to orotate with quinone as electron acceptor. The polypeptide is Dihydroorotate dehydrogenase (quinone) (Bartonella tribocorum (strain CIP 105476 / IBS 506)).